A 353-amino-acid polypeptide reads, in one-letter code: CCN family member 3 (353 aa).

The signal sequence occupies residues 1 to 26 (MEPGGGHSLPVLLLLLLLLLLRPSEV). Residues 29-103 (REAPCPRPCG…GGGTGICMVL (75 aa)) form the IGFBP N-terminal domain. 6 disulfide bridges follow: Cys-33/Cys-59, Cys-37/Cys-61, Cys-41/Cys-62, Cys-48/Cys-65, Cys-73/Cys-87, and Cys-79/Cys-100. The 67-residue stretch at 106 to 172 (DNCVFDGMIY…GECCEKWVCE (67 aa)) folds into the VWFC domain. Positions 203–248 (NCIEQTTEWSACSRSCGMGFSTRVTNRNQQCEMVKQTRLCMMRPCE) constitute a TSP type-1 domain. Disulfide bonds link Cys-260–Cys-297, Cys-277–Cys-311, Cys-288–Cys-327, Cys-291–Cys-329, and Cys-296–Cys-333. One can recognise a CTCK domain in the interval 260–334 (CIRTKKSMKA…NTCVCHGNCP (75 aa)). Residue Asn-276 is glycosylated (N-linked (GlcNAc...) asparagine).

It belongs to the CCN family.

Its subcellular location is the secreted. The protein localises to the cytoplasm. The protein resides in the cell junction. It localises to the gap junction. Functionally, immediate-early protein likely to play a role in cell growth regulation. The polypeptide is CCN family member 3 (CCN3) (Coturnix japonica (Japanese quail)).